We begin with the raw amino-acid sequence, 156 residues long: Protein UXT (156 aa).

This sequence belongs to the UXT family. In terms of assembly, homohexamer. Component of the PAQosome complex which is responsible for the biogenesis of several protein complexes and which consists of R2TP complex members RUVBL1, RUVBL2, RPAP3 and PIH1D1, URI complex members PFDN2, PFDN6, PDRG1, UXT and URI1 as well as ASDURF, POLR2E and DNAAF10/WDR92. Interacts with LRPPRC. Interacts with androgen receptor AR (via N-terminus). Interacts with estrogen receptor ESR1; the interaction relocalizes ESR1 to the cytoplasm. In the nucleus, interacts specifically with RELA (via RHD domain) and forms a dynamic complex with NF-kappa-B and is recruited to the NF-kappa-B enhanceosome upon stimulation. Interacts with MECOM. Interacts with URI1.

Its subcellular location is the cytoplasm. The protein localises to the nucleus. It is found in the cytoskeleton. It localises to the microtubule organizing center. The protein resides in the centrosome. Its subcellular location is the spindle pole. Its function is as follows. Involved in gene transcription regulation. Acts in concert with the corepressor URI1 to regulate androgen receptor AR-mediated transcription. Together with URI1, associates with chromatin to the NKX3-1 promoter region. Negatively regulates the transcriptional activity of the estrogen receptor ESR1 by inducing its translocation into the cytoplasm. May act as nuclear chaperone that facilitates the formation of the NF-kappa-B enhanceosome and thus positively regulates NF-kappa-B transcription activity. Potential component of mitochondrial-associated LRPPRC, a multidomain organizer that potentially integrates mitochondria and the microtubular cytoskeleton with chromosome remodeling. Increasing concentrations of UXT contributes to progressive aggregation of mitochondria and cell death potentially through its association with LRPPRC. Suppresses cell transformation and it might mediate this function by interaction and inhibition of the biological activity of cell proliferation and survival stimulatory factors like MECOM. This is Protein UXT (UXT) from Bos taurus (Bovine).